A 113-amino-acid polypeptide reads, in one-letter code: U11-theraphotoxin-Hhn1f (113 aa).

The first 21 residues, 1 to 21 (MNTVRVTFLLVFVLAVSLGQA), serve as a signal peptide directing secretion. The propeptide occupies 22–74 (DKDENRMEMQEKTEQGKSYLDFAENLLLQKLEELEAKLLEEDSKESRNSRQKR). The interval 61–82 (EEDSKESRNSRQKRCIGEGVPC) is disordered. Cystine bridges form between cysteine 75/cysteine 90, cysteine 82/cysteine 95, and cysteine 89/cysteine 110.

This sequence belongs to the neurotoxin 14 (magi-1) family. 01 (HNTX-16) subfamily. In terms of tissue distribution, expressed by the venom gland.

It is found in the secreted. Functionally, probable ion channel inhibitor. The sequence is that of U11-theraphotoxin-Hhn1f from Cyriopagopus hainanus (Chinese bird spider).